Reading from the N-terminus, the 367-residue chain is Dye-decolorizing peroxidase (367 aa).

The active-site Proton acceptor is Asp152. Heme is bound at residue His225. The disordered stretch occupies residues 311 to 367 (DPDGELAAAEPSDAQNDDPASASARIEETDPPNPASADDPAPADDSLGIGSLRRRDQ). Over residues 345 to 356 (ASADDPAPADDS) the composition is skewed to low complexity. Residues 358 to 365 (GIGSLRRR) form a targeting peptide region.

The protein belongs to the DyP-type peroxidase family. As to quaternary structure, homohexamer. Heme b is required as a cofactor.

The protein localises to the encapsulin nanocompartment. Functionally, cargo protein of a type 1 encapsulin nanocompartment. Has both general peroxidase activity and dye-decolorizing activity. Can catalyze the oxidation of both protoporphyrinogen IX and coproporphyrinogen III to their corresponding porphyrins. Also efficiently decolorizes the dyes alizarin red and Cibacron blue F3GA. This cargo-loaded encapsulin nanocompartment is probably involved in protection against oxidative damage. The sequence is that of Dye-decolorizing peroxidase from Brevibacterium linens.